The primary structure comprises 292 residues: MEAFPWAPRSPRRGRAPPPMALVPSARYVSAPGPAHPQPFSSWNDYLGLATLITKAVDGEPRFGCARGGNGGGGSPPSSSSSSCCSPHTGAGPGALGPALGPPDYDEDDDDDSDEPGSRGRYLGSALELRALELCAGPAEAGLLEERFAELSPFAGRAAAVLLGCAPAAAAAATTTSEATPREERAPAWAAEPRLHAASGAAAARLLKPELQVCVFCRNNKEAMALYTTHILKGPDGRVLCPVLRRYTCPLCGASGDNAHTIKYCPLSKVPPPPARPPPRSARDGPPGKKLR.

Disordered stretches follow at residues 1 to 41 (MEAF…QPFS) and 68 to 121 (GGNG…SRGR). Positions 40–56 (FSSWNDYLGLATLITKA) are essential for its translational repressor activity. Residues 76–87 (PPSSSSSSCCSP) are compositionally biased toward low complexity. Residues 104–115 (DYDEDDDDDSDE) are compositionally biased toward acidic residues. The Nanos-type zinc-finger motif lies at 213–267 (VCVFCRNNKEAMALYTTHILKGPDGRVLCPVLRRYTCPLCGASGDNAHTIKYCPL). The Zn(2+) site is built by cysteine 214, cysteine 217, histidine 230, cysteine 241, cysteine 249, cysteine 252, histidine 260, and cysteine 265. 2 consecutive short sequence motifs (C2HC) follow at residues 214–241 (CVFC…RVLC) and 249–265 (CPLC…IKYC). Residues 268-292 (SKVPPPPARPPPRSARDGPPGKKLR) form a disordered region. Positions 269-280 (KVPPPPARPPPR) are enriched in pro residues. The span at 281-292 (SARDGPPGKKLR) shows a compositional bias: basic and acidic residues.

This sequence belongs to the nanos family. In terms of assembly, interacts with PUM2, SNAPIN and CTNNB1. Interacts (via N-terminal region) with CTNND1. Interacts with DDX20 (via N-terminal region). As to expression, testis and ovary (at protein level). Predominantly expressed in testis. Specifically expressed during germline development. In adult tissues, it is mainly expressed in spermatogonia, the stem cells of the germline. Also expressed during meiosis in spermatocytes. Not present in late, post-meiotic stage germ cells. Expressed in fetal ovaries, while it is weakly or not expressed in mature postmeiotic oocytes, suggesting that it may be expressed in premeiotic female germ cells. Expressed at high levels only in the E-cadherin deficient cell lines. Highly expressed in lung carcinomas and mostly detected in invasive tumor cells and its expression correlates with tumor aggressiveness.

Its subcellular location is the cytoplasm. The protein resides in the perinuclear region. Functionally, may act as a translational repressor which regulates translation of specific mRNAs by forming a complex with PUM2 that associates with the 3'-UTR of mRNA targets. Capable of interfering with the proadhesive and anti-invasive functions of E-cadherin. Up-regulates the production of MMP14 to promote tumor cell invasion. This chain is Nanos homolog 1 (NANOS1), found in Homo sapiens (Human).